A 235-amino-acid chain; its full sequence is Ribonuclease 3 (235 aa).

The 128-residue stretch at leucine 7–glycine 134 folds into the RNase III domain. Glutamate 47 contributes to the Mg(2+) binding site. Aspartate 51 is a catalytic residue. Residues aspartate 120 and glutamate 123 each contribute to the Mg(2+) site. Residue glutamate 123 is part of the active site. The region spanning aspartate 161–valine 230 is the DRBM domain.

The protein belongs to the ribonuclease III family. In terms of assembly, homodimer. Mg(2+) serves as cofactor.

The protein localises to the cytoplasm. The catalysed reaction is Endonucleolytic cleavage to 5'-phosphomonoester.. Functionally, digests double-stranded RNA. Involved in the processing of primary rRNA transcript to yield the immediate precursors to the large and small rRNAs (23S and 16S). Processes some mRNAs, and tRNAs when they are encoded in the rRNA operon. Processes pre-crRNA and tracrRNA of type II CRISPR loci if present in the organism. This is Ribonuclease 3 from Clostridium tetani (strain Massachusetts / E88).